A 226-amino-acid polypeptide reads, in one-letter code: ATP synthase F(0) complex subunit a (226 aa).

The next 6 helical transmembrane spans lie at 12-32 (PTIL…LLIP), 68-88 (WSLM…LGLL), 97-117 (QLSM…ATGF), 138-158 (IPML…ALAV), 164-184 (ITAG…LSTI), and 200-222 (TTLE…SLYL).

The protein belongs to the ATPase A chain family. As to quaternary structure, component of the ATP synthase complex composed at least of ATP5F1A/subunit alpha, ATP5F1B/subunit beta, ATP5MC1/subunit c (homooctomer), MT-ATP6/subunit a, MT-ATP8/subunit 8, ATP5ME/subunit e, ATP5MF/subunit f, ATP5MG/subunit g, ATP5MK/subunit k, ATP5MJ/subunit j, ATP5F1C/subunit gamma, ATP5F1D/subunit delta, ATP5F1E/subunit epsilon, ATP5PF/subunit F6, ATP5PB/subunit b, ATP5PD/subunit d, ATP5PO/subunit OSCP. ATP synthase complex consists of a soluble F(1) head domain (subunits alpha(3) and beta(3)) - the catalytic core - and a membrane F(0) domain - the membrane proton channel (subunits c, a, 8, e, f, g, k and j). These two domains are linked by a central stalk (subunits gamma, delta, and epsilon) rotating inside the F1 region and a stationary peripheral stalk (subunits F6, b, d, and OSCP). Interacts with DNAJC30; interaction is direct.

The protein resides in the mitochondrion inner membrane. The catalysed reaction is H(+)(in) = H(+)(out). Functionally, subunit a, of the mitochondrial membrane ATP synthase complex (F(1)F(0) ATP synthase or Complex V) that produces ATP from ADP in the presence of a proton gradient across the membrane which is generated by electron transport complexes of the respiratory chain. ATP synthase complex consist of a soluble F(1) head domain - the catalytic core - and a membrane F(1) domain - the membrane proton channel. These two domains are linked by a central stalk rotating inside the F(1) region and a stationary peripheral stalk. During catalysis, ATP synthesis in the catalytic domain of F(1) is coupled via a rotary mechanism of the central stalk subunits to proton translocation. With the subunit c (ATP5MC1), forms the proton-conducting channel in the F(0) domain, that contains two crucial half-channels (inlet and outlet) that facilitate proton movement from the mitochondrial intermembrane space (IMS) into the matrix. Protons are taken up via the inlet half-channel and released through the outlet half-channel, following a Grotthuss mechanism. The protein is ATP synthase F(0) complex subunit a of Hylobates lar (Lar gibbon).